A 767-amino-acid chain; its full sequence is 5-methyltetrahydropteroyltriglutamate--homocysteine methyltransferase (767 aa).

Residue Lys-126 coordinates 5-methyltetrahydropteroyltri-L-glutamate. Residues 445–447 and Glu-498 each bind L-homocysteine; that span reads IGS. L-methionine contacts are provided by residues 445–447 and Glu-498; that span reads IGS. 5-methyltetrahydropteroyltri-L-glutamate contacts are provided by residues 529–530 and Trp-575; that span reads RC. Residue Asp-613 coordinates L-homocysteine. Asp-613 contributes to the L-methionine binding site. Glu-619 is a binding site for 5-methyltetrahydropteroyltri-L-glutamate. Residues His-655, Cys-657, and Glu-679 each contribute to the Zn(2+) site. Residue His-708 is the Proton donor of the active site. Cys-740 is a binding site for Zn(2+).

This sequence belongs to the vitamin-B12 independent methionine synthase family. Zn(2+) is required as a cofactor.

The enzyme catalyses 5-methyltetrahydropteroyltri-L-glutamate + L-homocysteine = tetrahydropteroyltri-L-glutamate + L-methionine. It functions in the pathway amino-acid biosynthesis; L-methionine biosynthesis via de novo pathway; L-methionine from L-homocysteine (MetE route): step 1/1. Catalyzes the transfer of a methyl group from 5-methyltetrahydrofolate to homocysteine resulting in methionine formation. The sequence is that of 5-methyltetrahydropteroyltriglutamate--homocysteine methyltransferase from Psychromonas ingrahamii (strain DSM 17664 / CCUG 51855 / 37).